The chain runs to 207 residues: Antitermination protein Q (207 aa).

A disordered region spans residues 1–28 (MRLESVAKFHSPKSPMMSDSPRATASDS). Residues cysteine 118, cysteine 121, cysteine 144, and cysteine 147 each coordinate Zn(2+). The segment at 118-147 (CRNCHGTGRAVDIAKTEQWGRVVEKECGRC) is a zinc-finger region. A DNA-binding region spans residues 171-192 (LTQPTWSRTVKPLYDALVVQCH).

This sequence belongs to the phage antitermination Q type 2 family. As to quaternary structure, interacts with host RPOB (via flap domain); this interaction renders host RNAP resistant to transcription pausing and allows it to read through termination signals. Interacts with host RNA polymerase sigma factor RPOD (via domain-4). Interacts with host NusA (via N-terminus and AR2 domain); this interaction releases the autoinhibition of NusA.

In terms of biological role, mediates the switch from middle to viral late gene expression by associating with host RNA polymerase (RNAP) so that the latter can read without pausing and through transcription terminators preceding late genes. Competes with host factor sigma 70 for binding to RPOB, the beta-subunit of host RNAP. To join the elongation complex, binds a specific DNA Q-binding element (QBE) and interacts with RNAP that is paused during early elongation. Participates in the lysis-lysogeny decision by activating the expression of the late lytic genes. This Salmonella typhimurium protein is Antitermination protein Q (23).